The sequence spans 675 residues: Methionine--tRNA ligase (675 aa).

A 'HIGH' region motif is present at residues 15–25; the sequence is PYANGSIHLGH. The Zn(2+) site is built by Cys146, Cys149, Cys159, and Cys162. Residues 331-335 carry the 'KMSKS' region motif; it reads KMSKS. Lys334 contributes to the ATP binding site. The 102-residue stretch at 574 to 675 folds into the tRNA-binding domain; sequence DFAKIDLRIA…EGAQPGMKVK (102 aa).

It belongs to the class-I aminoacyl-tRNA synthetase family. MetG type 1 subfamily. Homodimer. Requires Zn(2+) as cofactor.

The protein resides in the cytoplasm. The catalysed reaction is tRNA(Met) + L-methionine + ATP = L-methionyl-tRNA(Met) + AMP + diphosphate. Is required not only for elongation of protein synthesis but also for the initiation of all mRNA translation through initiator tRNA(fMet) aminoacylation. This chain is Methionine--tRNA ligase, found in Pseudoalteromonas atlantica (strain T6c / ATCC BAA-1087).